We begin with the raw amino-acid sequence, 172 residues long: Shikimate kinase (172 aa).

An ATP-binding site is contributed by 14-19 (GAGKST). Ser-18 provides a ligand contact to Mg(2+). 3 residues coordinate substrate: Asp-36, Arg-60, and Gly-82. ATP is bound at residue Arg-120. Arg-140 lines the substrate pocket.

The protein belongs to the shikimate kinase family. Monomer. Mg(2+) is required as a cofactor.

It localises to the cytoplasm. It carries out the reaction shikimate + ATP = 3-phosphoshikimate + ADP + H(+). Its pathway is metabolic intermediate biosynthesis; chorismate biosynthesis; chorismate from D-erythrose 4-phosphate and phosphoenolpyruvate: step 5/7. In terms of biological role, catalyzes the specific phosphorylation of the 3-hydroxyl group of shikimic acid using ATP as a cosubstrate. This chain is Shikimate kinase, found in Tolumonas auensis (strain DSM 9187 / NBRC 110442 / TA 4).